Consider the following 542-residue polypeptide: Protein MGF 505-11L (542 aa).

It belongs to the asfivirus MGF 505 family.

Functionally, plays a role in virus cell tropism, and may be required for efficient virus replication in macrophages. In African swine fever virus (isolate Warthog/Namibia/Wart80/1980) (ASFV), this protein is Protein MGF 505-11L.